The sequence spans 210 residues: MPPYTVVYFPVRGRCAALRMLLADQGQSWKEEVVSMETWQEGSLKASCLYGQLPKFQDGDLTLYQSNTILRHLGRTLGLYGKDQREAALVDMVNDGVEDLRCKYLSLIYTNYEAGKDDYVKALPGQLKPFETLLSQNQGGKTFIVGDQISFADYNLLDLLLIHEVLAPGCLDAFPLLSAYVARLSARPKLKAFLASPEHVNLPINGNGKQ.

Positions 2 to 81 (PPYTVVYFPV…HLGRTLGLYG (80 aa)) constitute a GST N-terminal domain. Tyr-4 carries the phosphotyrosine; by EGFR modification. Glutathione-binding positions include Tyr-8, Arg-14, Trp-39, Lys-45, and 52-53 (QL). At Thr-62 the chain carries Phosphothreonine. 65–66 (QS) contacts glutathione. In terms of domain architecture, GST C-terminal spans 83–204 (DQREAALVDM…ASPEHVNLPI (122 aa)). N6-succinyllysine occurs at positions 103 and 116. Lys-128 bears the N6-acetyllysine mark.

This sequence belongs to the GST superfamily. Pi family. As to quaternary structure, homodimer. Interacts with CDK5.

It is found in the cytoplasm. Its subcellular location is the mitochondrion. The protein localises to the nucleus. The enzyme catalyses RX + glutathione = an S-substituted glutathione + a halide anion + H(+). It catalyses the reaction prostaglandin J2 + glutathione = prostaglandin J2-S-(R)-glutathione. The catalysed reaction is prostaglandin J2 + glutathione = prostaglandin J2-S-(S)-glutathione. It carries out the reaction prostaglandin A2 + glutathione = prostaglandin A2-S-(S)-glutathione. The enzyme catalyses 11(S)-hydroxy-14(S),15(S)-epoxy-(5Z,8Z,12E)-eicosatrienoate + glutathione = (11S,15S)-dihydroxy-14(R)-S-glutathionyl-(5Z,8Z,12E)-eicosatrienoate. Conjugation of reduced glutathione to a wide number of exogenous and endogenous hydrophobic electrophiles. Involved in the formation of glutathione conjugates of both prostaglandin A2 (PGA2) and prostaglandin J2 (PGJ2). Participates in the formation of novel hepoxilin regioisomers. Negatively regulates CDK5 activity via p25/p35 translocation to prevent neurodegeneration. This is Glutathione S-transferase P (GSTP1) from Pongo abelii (Sumatran orangutan).